An 842-amino-acid polypeptide reads, in one-letter code: CRM-domain containing factor CFM3, chloroplastic/mitochondrial (842 aa).

The transit peptide at 1–82 directs the protein to the chloroplast and mitochondrion; the sequence is MAMASSPACH…RSSGRSTMSL (82 aa). Disordered regions lie at residues 49–80, 141–160, and 254–290; these read AALD…RSTM, RFPW…SARS, and VDYD…LPTE. The CRM 1 domain maps to 167 to 263; the sequence is LTLPAAELRR…VDYDEPEPTK (97 aa). Polar residues predominate over residues 280-290; it reads GSSNPSLLPTE. CRM domains are found at residues 371 to 468 and 582 to 682; these read PSLS…ELAE and ETIT…SSLR. A coiled-coil region spans residues 703–732; sequence QALSRHFAKLNRKVERLKAELVQMEDVKEQ. A disordered region spans residues 768-842; the sequence is VAGATADDDG…DRRNHDVNEY (75 aa). A compositionally biased stretch (acidic residues) spans 786 to 812; the sequence is DEADYPDSDDEAGDCSEDEGEDDEDEA. Residues 831–842 are compositionally biased toward basic and acidic residues; that stretch reads DTDRRNHDVNEY.

As to quaternary structure, interacts with RNA. Part of large ribonucleo-protein particles that contain CAF1 and/or CAF2, and RNC1.

Its subcellular location is the plastid. It is found in the chloroplast stroma. It localises to the mitochondrion. In terms of biological role, binds specific group II introns in chloroplasts and facilitates their splicing. Acts on subgroup IIB introns. The substrates of the subgroup IIB also require the CRM domain proteins CAF1 or CAF2, with a simultaneous binding of CFM3 and CAF1 or CAF2. May influence the biogenesis of the mitochondrial small ribosomal subunit. The sequence is that of CRM-domain containing factor CFM3, chloroplastic/mitochondrial from Zea mays (Maize).